Consider the following 206-residue polypeptide: Small ribosomal subunit protein uS4c (206 aa).

One can recognise an S4 RNA-binding domain in the interval 93–161 (MRLDNIVYRL…IEKNIELLDK (69 aa)).

It belongs to the universal ribosomal protein uS4 family. Part of the 30S ribosomal subunit. Contacts protein S5. The interaction surface between S4 and S5 is involved in control of translational fidelity.

The protein resides in the plastid. Its function is as follows. One of the primary rRNA binding proteins, it binds directly to 16S rRNA where it nucleates assembly of the body of the 30S subunit. In terms of biological role, with S5 and S12 plays an important role in translational accuracy. This Euglena longa (Euglenophycean alga) protein is Small ribosomal subunit protein uS4c (rps4).